The primary structure comprises 179 residues: MTRLENMYKKEVVPALIKRFGYSNPMAVPRLVKITLNMGVGEAATNKKVLENALADMAKISGQKPIVTKSRISVASFKIRNGWPIGCKTTLRRSKMYEFLDRLINISLPCVRDFRGIPPRSFDGRGNFNMGVKEQVVFPEIDFDAVDAIRGMDIAITTTANSDAEAKALLDAFNFPFRN.

This sequence belongs to the universal ribosomal protein uL5 family. As to quaternary structure, part of the 50S ribosomal subunit; part of the 5S rRNA/L5/L18/L25 subcomplex. Contacts the 5S rRNA and the P site tRNA. Forms a bridge to the 30S subunit in the 70S ribosome.

Its function is as follows. This is one of the proteins that bind and probably mediate the attachment of the 5S RNA into the large ribosomal subunit, where it forms part of the central protuberance. In the 70S ribosome it contacts protein S13 of the 30S subunit (bridge B1b), connecting the 2 subunits; this bridge is implicated in subunit movement. Contacts the P site tRNA; the 5S rRNA and some of its associated proteins might help stabilize positioning of ribosome-bound tRNAs. This is Large ribosomal subunit protein uL5 from Xylella fastidiosa (strain M23).